We begin with the raw amino-acid sequence, 211 residues long: Ribosomal RNA small subunit methyltransferase G (211 aa).

S-adenosyl-L-methionine contacts are provided by residues G76, L81, 127–128, and R142; that span reads VE.

Belongs to the methyltransferase superfamily. RNA methyltransferase RsmG family.

Its subcellular location is the cytoplasm. It catalyses the reaction guanosine(527) in 16S rRNA + S-adenosyl-L-methionine = N(7)-methylguanosine(527) in 16S rRNA + S-adenosyl-L-homocysteine. In terms of biological role, specifically methylates the N7 position of guanine in position 527 of 16S rRNA. This is Ribosomal RNA small subunit methyltransferase G from Vibrio vulnificus (strain CMCP6).